The primary structure comprises 126 residues: Protein ApaG (126 aa).

The region spanning threonine 2–histidine 126 is the ApaG domain.

The chain is Protein ApaG from Shewanella sediminis (strain HAW-EB3).